A 394-amino-acid polypeptide reads, in one-letter code: Elongation factor Tu 2 (394 aa).

The tr-type G domain maps to 10-204 (KPHVNVGTIG…ALDSYIPEPE (195 aa)). The G1 stretch occupies residues 19–26 (GHVDHGKT). Position 19 to 26 (19 to 26 (GHVDHGKT)) interacts with GTP. Position 26 (T26) interacts with Mg(2+). Residues 60–64 (GITIS) form a G2 region. The segment at 81-84 (DCPG) is G3. Residues 81–85 (DCPGH) and 136–139 (NKCD) contribute to the GTP site. Positions 136-139 (NKCD) are G4. Residues 174-176 (SAL) form a G5 region.

The protein belongs to the TRAFAC class translation factor GTPase superfamily. Classic translation factor GTPase family. EF-Tu/EF-1A subfamily. Monomer.

It localises to the cytoplasm. It catalyses the reaction GTP + H2O = GDP + phosphate + H(+). Functionally, GTP hydrolase that promotes the GTP-dependent binding of aminoacyl-tRNA to the A-site of ribosomes during protein biosynthesis. This chain is Elongation factor Tu 2, found in Photorhabdus laumondii subsp. laumondii (strain DSM 15139 / CIP 105565 / TT01) (Photorhabdus luminescens subsp. laumondii).